The following is a 158-amino-acid chain: Cathelicidin-6 (158 aa).

The N-terminal stretch at 1–29 (METQRASLSLGRWSLWLLLLGLALPSASA) is a signal peptide. Positions 30-131 (QALSYREAVL…NVTCEELQSV (102 aa)) are excised as a propeptide. 2 cysteine pairs are disulfide-bonded: Cys86-Cys97 and Cys108-Cys125.

The protein belongs to the cathelicidin family.

Its subcellular location is the secreted. In terms of biological role, exerts a potent antimicrobial activity against Gram-negative and Gram-positive bacteria, including methicillin-resistant Staphylococcus aureus, and fungi. The sequence is that of Cathelicidin-6 (CATHL6) from Bos taurus (Bovine).